Here is a 478-residue protein sequence, read N- to C-terminus: Putative L-amino-acid oxidase YobN (478 aa).

FAD-binding positions include S34, E53, R61, and 80–81 (MR). Positions 81 and 369 each coordinate substrate. Residues E451 and 460–463 (MQGA) contribute to the FAD site.

It belongs to the flavin monoamine oxidase family. FIG1 subfamily. It depends on FAD as a cofactor.

The enzyme catalyses an L-alpha-amino acid + O2 + H2O = a 2-oxocarboxylate + H2O2 + NH4(+). In Bacillus subtilis (strain 168), this protein is Putative L-amino-acid oxidase YobN (yobN).